The chain runs to 150 residues: Large ribosomal subunit protein bL9 (150 aa).

Belongs to the bacterial ribosomal protein bL9 family.

In terms of biological role, binds to the 23S rRNA. The polypeptide is Large ribosomal subunit protein bL9 (Mycoplasmopsis pulmonis (strain UAB CTIP) (Mycoplasma pulmonis)).